Consider the following 354-residue polypeptide: Polyprenal reductase 1 (354 aa).

A run of 6 helical transmembrane segments spans residues 11–31 (PLLC…ALPI), 78–98 (FMHF…AIWF), 141–158 (YHVW…IQVL), 176–196 (MHIV…LSLA), 235–255 (PLLK…WGSL), and 301–321 (GMLV…VFVI).

It belongs to the steroid 5-alpha reductase family. Polyprenal reductase subfamily.

It localises to the cell membrane. It carries out the reaction a di-trans,poly-cis-dolichal + NADP(+) = a di-trans,poly-cis-polyprenal + NADPH + H(+). It participates in protein modification; protein glycosylation. Its function is as follows. Plays a key role in early steps of protein N-linked glycosylation by being involved in the conversion of polyprenol into dolichol. Acts as a polyprenal reductase that mediates the reduction of polyprenal into dolichal in a NADP-dependent mechanism. Dolichols are required for the synthesis of dolichol-linked monosaccharides and the oligosaccharide precursor used for N-glycosylation. The protein is Polyprenal reductase 1 of Oryza sativa subsp. indica (Rice).